The chain runs to 86 residues: Small ribosomal subunit protein bS20 (86 aa).

A disordered region spans residues 1 to 25; it reads MANIKSQMKRIKTNEANRQRNKAVK.

Belongs to the bacterial ribosomal protein bS20 family.

Functionally, binds directly to 16S ribosomal RNA. In Saccharopolyspora erythraea (strain ATCC 11635 / DSM 40517 / JCM 4748 / NBRC 13426 / NCIMB 8594 / NRRL 2338), this protein is Small ribosomal subunit protein bS20.